The chain runs to 352 residues: Protein pelota homolog (352 aa).

Belongs to the eukaryotic release factor 1 family. Pelota subfamily. In terms of assembly, monomer. The cofactor is a divalent metal cation.

It localises to the cytoplasm. In terms of biological role, may function in recognizing stalled ribosomes, interact with stem-loop structures in stalled mRNA molecules, and effect endonucleolytic cleavage of the mRNA. May play a role in the release non-functional ribosomes and degradation of damaged mRNAs. Has endoribonuclease activity. The sequence is that of Protein pelota homolog from Thermofilum pendens (strain DSM 2475 / Hrk 5).